The sequence spans 87 residues: Exodeoxyribonuclease 7 small subunit (87 aa).

Belongs to the XseB family. As to quaternary structure, heterooligomer composed of large and small subunits.

It is found in the cytoplasm. It carries out the reaction Exonucleolytic cleavage in either 5'- to 3'- or 3'- to 5'-direction to yield nucleoside 5'-phosphates.. Its function is as follows. Bidirectionally degrades single-stranded DNA into large acid-insoluble oligonucleotides, which are then degraded further into small acid-soluble oligonucleotides. The chain is Exodeoxyribonuclease 7 small subunit from Halorhodospira halophila (strain DSM 244 / SL1) (Ectothiorhodospira halophila (strain DSM 244 / SL1)).